Here is a 545-residue protein sequence, read N- to C-terminus: T-complex protein 1 subunit gamma (545 aa).

The residue at position 1 (Met-1) is an N-acetylmethionine. A disordered region spans residues 1-24 (MMGHRPVLVLSQNTKRESGRKVQS). The residue at position 11 (Ser-11) is a Phosphoserine. Lys-15 is covalently cross-linked (Glycyl lysine isopeptide (Lys-Gly) (interchain with G-Cter in SUMO2)). Gly-42 lines the ADP pocket. Gly-42 provides a ligand contact to ATP. Asp-93 is a binding site for Mg(2+). ADP contacts are provided by Gly-94, Thr-95, Thr-96, Ser-97, Thr-162, and Lys-163. Residues Gly-94, Thr-95, and Thr-96 each coordinate ATP. At Ser-170 the chain carries Phosphoserine. An N6-acetyllysine modification is found at Lys-222. Ser-243 and Ser-244 each carry phosphoserine. A Phosphotyrosine modification is found at Tyr-247. Glycyl lysine isopeptide (Lys-Gly) (interchain with G-Cter in SUMO2) cross-links involve residues Lys-248 and Lys-249. At Ser-252 the chain carries Phosphoserine. Cys-366 and Cys-372 are disulfide-bonded. A Glycyl lysine isopeptide (Lys-Gly) (interchain with G-Cter in SUMO2) cross-link involves residue Lys-381. An ADP-binding site is contributed by Gly-411. Gly-411 is an ATP binding site. Phosphothreonine occurs at positions 430 and 459. Residues Gly-482, Glu-483, Glu-497, and Lys-502 each coordinate ADP. Residue Gly-482 participates in ATP binding. Glu-497 contributes to the ATP binding site. A disordered region spans residues 526–545 (HKKKGDDQSRQGGAPDAGQE).

Belongs to the TCP-1 chaperonin family. In terms of assembly, component of the chaperonin-containing T-complex (TRiC), a hexadecamer composed of two identical back-to-back stacked rings enclosing a protein folding chamber. Each ring is made up of eight different subunits: TCP1/CCT1, CCT2, CCT3, CCT4, CCT5, CCT6A/CCT6, CCT7, CCT8. Interacts with PACRG. Interacts with DNAAF4. Interacts with DLEC1.

Its subcellular location is the cytoplasm. It catalyses the reaction ATP + H2O = ADP + phosphate + H(+). In terms of biological role, component of the chaperonin-containing T-complex (TRiC), a molecular chaperone complex that assists the folding of actin, tubulin and other proteins upon ATP hydrolysis. The TRiC complex mediates the folding of WRAP53/TCAB1, thereby regulating telomere maintenance. As part of the TRiC complex may play a role in the assembly of BBSome, a complex involved in ciliogenesis regulating transports vesicles to the cilia. The polypeptide is T-complex protein 1 subunit gamma (CCT3) (Pongo abelii (Sumatran orangutan)).